Here is a 95-residue protein sequence, read N- to C-terminus: Antitoxin VapB41 (95 aa).

Functionally, antitoxin component of a type II toxin-antitoxin (TA) system. This is Antitoxin VapB41 (vapB41) from Mycobacterium tuberculosis (strain CDC 1551 / Oshkosh).